A 714-amino-acid polypeptide reads, in one-letter code: Fatty acid oxidation complex subunit alpha (714 aa).

The tract at residues 1–190 (MDTVSAFKLE…KAGLVDEVVP (190 aa)) is enoyl-CoA hydratase. The interval 306-714 (GPLTSIAVLG…TFWPADERLT (409 aa)) is 3-hydroxyacyl-CoA dehydrogenase.

It in the N-terminal section; belongs to the enoyl-CoA hydratase/isomerase family. The protein in the central section; belongs to the 3-hydroxyacyl-CoA dehydrogenase family. As to quaternary structure, heterotetramer of two alpha chains (FadJ) and two beta chains (FadI).

The protein localises to the cytoplasm. It catalyses the reaction a (3S)-3-hydroxyacyl-CoA = a (2E)-enoyl-CoA + H2O. It carries out the reaction a 4-saturated-(3S)-3-hydroxyacyl-CoA = a (3E)-enoyl-CoA + H2O. The enzyme catalyses a (3S)-3-hydroxyacyl-CoA + NAD(+) = a 3-oxoacyl-CoA + NADH + H(+). The catalysed reaction is (3S)-3-hydroxybutanoyl-CoA = (3R)-3-hydroxybutanoyl-CoA. It participates in lipid metabolism; fatty acid beta-oxidation. In terms of biological role, catalyzes the formation of a hydroxyacyl-CoA by addition of water on enoyl-CoA. Also exhibits 3-hydroxyacyl-CoA epimerase and 3-hydroxyacyl-CoA dehydrogenase activities. The protein is Fatty acid oxidation complex subunit alpha of Klebsiella pneumoniae (strain 342).